We begin with the raw amino-acid sequence, 576 residues long: Aspartate--tRNA ligase (576 aa).

Glutamate 173 contributes to the L-aspartate binding site. Residues 197–200 (QLFK) form an aspartate region. Residue arginine 219 coordinates L-aspartate. ATP-binding positions include 219–221 (RDE) and glutamine 228. Position 438 (histidine 438) interacts with L-aspartate. Glutamate 470 contributes to the ATP binding site. Position 477 (arginine 477) interacts with L-aspartate. 522-525 (GLDR) contributes to the ATP binding site.

This sequence belongs to the class-II aminoacyl-tRNA synthetase family. Type 1 subfamily. In terms of assembly, homodimer.

It is found in the cytoplasm. The enzyme catalyses tRNA(Asp) + L-aspartate + ATP = L-aspartyl-tRNA(Asp) + AMP + diphosphate. Its function is as follows. Catalyzes the attachment of L-aspartate to tRNA(Asp) in a two-step reaction: L-aspartate is first activated by ATP to form Asp-AMP and then transferred to the acceptor end of tRNA(Asp). In Aster yellows witches'-broom phytoplasma (strain AYWB), this protein is Aspartate--tRNA ligase.